The primary structure comprises 97 residues: Small ribosomal subunit protein bS6 (97 aa).

It belongs to the bacterial ribosomal protein bS6 family.

In terms of biological role, binds together with bS18 to 16S ribosomal RNA. The protein is Small ribosomal subunit protein bS6 of Dictyoglomus turgidum (strain DSM 6724 / Z-1310).